The sequence spans 227 residues: Cytochrome c oxidase subunit 2 (227 aa).

Residues Met1–Ser14 lie on the Mitochondrial intermembrane side of the membrane. The helical transmembrane segment at Pro15–Met45 threads the bilayer. Residues Leu46 to Gln59 lie on the Mitochondrial matrix side of the membrane. A helical membrane pass occupies residues Glu60–Met87. At Asp88–Leu227 the chain is on the mitochondrial intermembrane side. Residues His161, Cys196, Glu198, Cys200, His204, and Met207 each contribute to the Cu cation site. Glu198 lines the Mg(2+) pocket. Tyr218 carries the phosphotyrosine modification.

Belongs to the cytochrome c oxidase subunit 2 family. In terms of assembly, component of the cytochrome c oxidase (complex IV, CIV), a multisubunit enzyme composed of 14 subunits. The complex is composed of a catalytic core of 3 subunits MT-CO1, MT-CO2 and MT-CO3, encoded in the mitochondrial DNA, and 11 supernumerary subunits COX4I, COX5A, COX5B, COX6A, COX6B, COX6C, COX7A, COX7B, COX7C, COX8 and NDUFA4, which are encoded in the nuclear genome. The complex exists as a monomer or a dimer and forms supercomplexes (SCs) in the inner mitochondrial membrane with NADH-ubiquinone oxidoreductase (complex I, CI) and ubiquinol-cytochrome c oxidoreductase (cytochrome b-c1 complex, complex III, CIII), resulting in different assemblies (supercomplex SCI(1)III(2)IV(1) and megacomplex MCI(2)III(2)IV(2)). Found in a complex with TMEM177, COA6, COX18, COX20, SCO1 and SCO2. Interacts with TMEM177 in a COX20-dependent manner. Interacts with COX20. Interacts with COX16. Cu cation serves as cofactor.

Its subcellular location is the mitochondrion inner membrane. It catalyses the reaction 4 Fe(II)-[cytochrome c] + O2 + 8 H(+)(in) = 4 Fe(III)-[cytochrome c] + 2 H2O + 4 H(+)(out). Its function is as follows. Component of the cytochrome c oxidase, the last enzyme in the mitochondrial electron transport chain which drives oxidative phosphorylation. The respiratory chain contains 3 multisubunit complexes succinate dehydrogenase (complex II, CII), ubiquinol-cytochrome c oxidoreductase (cytochrome b-c1 complex, complex III, CIII) and cytochrome c oxidase (complex IV, CIV), that cooperate to transfer electrons derived from NADH and succinate to molecular oxygen, creating an electrochemical gradient over the inner membrane that drives transmembrane transport and the ATP synthase. Cytochrome c oxidase is the component of the respiratory chain that catalyzes the reduction of oxygen to water. Electrons originating from reduced cytochrome c in the intermembrane space (IMS) are transferred via the dinuclear copper A center (CU(A)) of subunit 2 and heme A of subunit 1 to the active site in subunit 1, a binuclear center (BNC) formed by heme A3 and copper B (CU(B)). The BNC reduces molecular oxygen to 2 water molecules using 4 electrons from cytochrome c in the IMS and 4 protons from the mitochondrial matrix. The polypeptide is Cytochrome c oxidase subunit 2 (MT-CO2) (Syncerus caffer (African buffalo)).